The sequence spans 293 residues: 4-hydroxy-tetrahydrodipicolinate synthase (293 aa).

Position 47 (T47) interacts with pyruvate. Y136 serves as the catalytic Proton donor/acceptor. K164 (schiff-base intermediate with substrate) is an active-site residue. Position 206 (I206) interacts with pyruvate.

This sequence belongs to the DapA family. As to quaternary structure, homotetramer; dimer of dimers.

It is found in the cytoplasm. The enzyme catalyses L-aspartate 4-semialdehyde + pyruvate = (2S,4S)-4-hydroxy-2,3,4,5-tetrahydrodipicolinate + H2O + H(+). It participates in amino-acid biosynthesis; L-lysine biosynthesis via DAP pathway; (S)-tetrahydrodipicolinate from L-aspartate: step 3/4. Its function is as follows. Catalyzes the condensation of (S)-aspartate-beta-semialdehyde [(S)-ASA] and pyruvate to 4-hydroxy-tetrahydrodipicolinate (HTPA). The protein is 4-hydroxy-tetrahydrodipicolinate synthase of Listeria monocytogenes serovar 1/2a (strain ATCC BAA-679 / EGD-e).